The following is a 617-amino-acid chain: Protein fem-1 homolog C (617 aa).

An N-acetylmethionine modification is found at M1. ANK repeat units follow at residues 2–31 (DLKTAVFNAARDGKLRLLTKLLASKSKAEV), 40–70 (NGATPLLMAARYGHLDMVEFLLEQCSASIEV), 82–111 (EGAPPLWAASAAGHLKVVQSLLNHGASVNN), 115–144 (TNSTPLRAACFDGHLEIVKYLVEHKADLEV), 148–177 (HGHTCLMISCYKGHKEIAQYLLEKGADVNR), 181–210 (KGNTALHDCAESGSLDIMKMLLMYCAKMEK), and 213–242 (YGMTPLLSASVTGHTNIVDFLTHHAQTSKT). 2 TPR repeats span residues 245–279 (INALELLGATFVDKKRDLLGALKYWKKAMNMRYSD) and 338–371 (SYYIRYRGAVYADSGNFKRCINLWKYALDMQQSN). ANK repeat units follow at residues 481–523 (NNFS…DVNV) and 527–556 (DDNSPLHIAALNNHPDIMNLLIKSGAHFDA).

This sequence belongs to the fem-1 family. Component of a Cul2-RING (CRL2) E3 ubiquitin-protein ligase complex, also named ECS (Elongin BC-CUL2/5-SOCS-box protein) complex, composed of CUL2, Elongin BC (ELOB and ELOC), RBX1 and substrate-specific adapter FEM1C. Widely expressed. Expressed at higher level in testis.

Its pathway is protein modification; protein ubiquitination. Functionally, substrate-recognition component of a Cul2-RING (CRL2) E3 ubiquitin-protein ligase complex of the DesCEND (destruction via C-end degrons) pathway, which recognizes a C-degron located at the extreme C terminus of target proteins, leading to their ubiquitination and degradation. The C-degron recognized by the DesCEND pathway is usually a motif of less than ten residues and can be present in full-length proteins, truncated proteins or proteolytically cleaved forms. The CRL2(FEM1C) complex specifically recognizes proteins with an arginine at the C-terminus: recognizes and binds proteins ending with -Lys/Arg-Xaa-Arg and -Lys/Arg-Xaa-Xaa-Arg C-degrons, such as SIL1 or OR51B2, leading to their ubiquitination and degradation. The CRL2(FEM1C) complex mediates ubiquitination and degradation of truncated MSRB1/SEPX1 selenoproteins produced by failed UGA/Sec decoding. Promotes ubiquitination and degradation of SLBP. In Mus musculus (Mouse), this protein is Protein fem-1 homolog C.